A 460-amino-acid chain; its full sequence is Transcription factor TGA10 (460 aa).

The segment covering methionine 1–histidine 11 has biased composition (basic residues). Disordered stretches follow at residues methionine 1–glycine 29 and leucine 43–leucine 163. Residues leucine 12–histidine 21 show a composition bias toward low complexity. Polar residues-rich tracts occupy residues threonine 65 to proline 81 and aspartate 121 to lysine 136. Basic and acidic residues predominate over residues isoleucine 138–threonine 162. One can recognise a bZIP domain in the interval aspartate 159–arginine 203. Residues lysine 161–lysine 181 form a basic motif region. The Nuclear localization signal motif lies at leucine 163–arginine 170. Residues leucine 187–isoleucine 201 are leucine-zipper. The region spanning alanine 236–arginine 455 is the DOG1 domain.

The protein belongs to the bZIP family. In terms of assembly, homodimer. Binds DNA as a dimer. Interacts with floral glutaredoxins GRXC7/ROXY1 and GRXC8/ROXY2 in the nucleus. Interacts with TGA1, TGA2, TGA3, TGA4, TGA5, TGA6, TGA7, TGA9 and PAN. Expressed at low levels in inflorescence apex and flowers.

It is found in the nucleus. Functionally, together with TGA9, basic leucine-zipper transcription factor required for anther development, probably via the activation of SPL expression in anthers and via the regulation of genes with functions in early and middle tapetal development. Required for signaling responses to pathogen-associated molecular patterns (PAMPs) such as flg22 that involves chloroplastic reactive oxygen species (ROS) production and subsequent expression of H(2)O(2)-responsive genes. This chain is Transcription factor TGA10, found in Arabidopsis thaliana (Mouse-ear cress).